Here is a 583-residue protein sequence, read N- to C-terminus: MLO-like protein 6 (583 aa).

The Extracellular segment spans residues 1-15 (MADQVKEKTLEETST). Residues 16-36 (WAVAVVCFVLLLISIVIEKLI) form a helical membrane-spanning segment. The Cytoplasmic segment spans residues 37–61 (HKIGSWFKKKNKKALYEALEKVKAE). The chain crosses the membrane as a helical span at residues 62–82 (LMLMGFISLLLTIGQGYISNI). The Extracellular segment spans residues 83–161 (CIPKNIAASM…VSAYGMHQLH (79 aa)). Residues 162 to 182 (IFIFVLAVCHVIYCIVTYALG) traverse the membrane as a helical segment. The Cytoplasmic portion of the chain corresponds to 183-284 (KTKMRRWKKW…KYIQRSLEED (102 aa)). Residues 285 to 305 (FKTIVEINPVIWFIAVLFLLT) form a helical membrane-spanning segment. Over 306 to 314 (NTNGLNSYL) the chain is Extracellular. A helical membrane pass occupies residues 315 to 335 (WLPFIPFIVILIVGTKLQVII). The Cytoplasmic portion of the chain corresponds to 336-368 (TKLGLRIQEKGDVVKGTPLVQPGDHFFWFGRPR). Residues 369 to 389 (FILFLIHLVLFTNAFQLAFFV) traverse the membrane as a helical segment. Residues 390 to 411 (WSTYEFGLKNCFHESRVDVIIR) are Extracellular-facing. Residues 412–432 (ISIGLLVQILCSYVTLPLYAL) traverse the membrane as a helical segment. Residues 433 to 583 (VTQMGSKMKP…ISLRDFSFKR (151 aa)) are Cytoplasmic-facing. The calmodulin-binding stretch occupies residues 447 to 468 (ERVATALKSWHHTAKKNIKHGR). The interval 461-583 (KKNIKHGRTS…ISLRDFSFKR (123 aa)) is disordered. A compositionally biased stretch (low complexity) spans 470-484 (SESTTPFSSRPTTPT). Positions 541–551 (RFGEEESEKKF) are enriched in basic and acidic residues.

It belongs to the MLO family.

It is found in the membrane. Its function is as follows. May be involved in modulation of pathogen defense and leaf cell death. Activity seems to be regulated by Ca(2+)-dependent calmodulin binding and seems not to require heterotrimeric G proteins. The polypeptide is MLO-like protein 6 (MLO6) (Arabidopsis thaliana (Mouse-ear cress)).